A 490-amino-acid polypeptide reads, in one-letter code: Probable cytosol aminopeptidase (490 aa).

Lys-262 and Asp-267 together coordinate Mn(2+). Lys-274 is an active-site residue. Positions 285, 344, and 346 each coordinate Mn(2+). Residue Arg-348 is part of the active site.

The protein belongs to the peptidase M17 family. Requires Mn(2+) as cofactor.

The protein localises to the cytoplasm. It catalyses the reaction Release of an N-terminal amino acid, Xaa-|-Yaa-, in which Xaa is preferably Leu, but may be other amino acids including Pro although not Arg or Lys, and Yaa may be Pro. Amino acid amides and methyl esters are also readily hydrolyzed, but rates on arylamides are exceedingly low.. The catalysed reaction is Release of an N-terminal amino acid, preferentially leucine, but not glutamic or aspartic acids.. In terms of biological role, presumably involved in the processing and regular turnover of intracellular proteins. Catalyzes the removal of unsubstituted N-terminal amino acids from various peptides. This chain is Probable cytosol aminopeptidase, found in Xanthomonas axonopodis pv. citri (strain 306).